The primary structure comprises 500 residues: MTIFDNYEVWFVIGSQHLYGPETLRQVTQHAEHVVNALNTEAKLPCKLVLKPLGTTPDEITAICRDANYDDRCAGLVVWLHTFSPAKMWINGLTMLNKPLLQFHTQFNAALPWDSIDMDFMNLNQTAHGGREFGFIGARMRQQHAVVTGHWQDKQAHERIGSWMRQAVSKQDTRHLKVCRFGDNMREVAVTDGDKVAAQIKFGFSVNTWAVGDLVQVVNSISDGDVNALVDEYESCYTMTPATQIHGEKRQNVLEAARIELGMKRFLEQGGFHAFTTTFEDLHGLKQLPGLAVQRLMQQGYGFAGEGDWKTAALLRIMKVMSTGLQGGTSFMEDYTYHFEKGNDLVLGSHMLEVCPSIAVEEKPILDVQHLGIGGKDDPARLIFNTQTGPAIVASLIDLGDRYRLLVNCIDTVKTPHSLLKLPVANALWKAQPDLPTASEAWILAGGAHHTVFSHALNLNDMRQFAEMHDIEITVIDNDTRLPAFKDALRWNEVYYGFRR.

Residues E306, E333, H350, and H450 each coordinate Mn(2+).

This sequence belongs to the arabinose isomerase family. Homohexamer. Mn(2+) is required as a cofactor.

The catalysed reaction is beta-L-arabinopyranose = L-ribulose. Its pathway is carbohydrate degradation; L-arabinose degradation via L-ribulose; D-xylulose 5-phosphate from L-arabinose (bacterial route): step 1/3. In terms of biological role, catalyzes the conversion of L-arabinose to L-ribulose. This chain is L-arabinose isomerase, found in Shigella boydii serotype 18 (strain CDC 3083-94 / BS512).